Consider the following 379-residue polypeptide: Cobalt-precorrin-5B C(1)-methyltransferase (379 aa).

This sequence belongs to the CbiD family.

It carries out the reaction Co-precorrin-5B + S-adenosyl-L-methionine = Co-precorrin-6A + S-adenosyl-L-homocysteine. The protein operates within cofactor biosynthesis; adenosylcobalamin biosynthesis; cob(II)yrinate a,c-diamide from sirohydrochlorin (anaerobic route): step 6/10. Catalyzes the methylation of C-1 in cobalt-precorrin-5B to form cobalt-precorrin-6A. In Salmonella dublin (strain CT_02021853), this protein is Cobalt-precorrin-5B C(1)-methyltransferase.